The following is a 490-amino-acid chain: MLDTLVPGAPVLVAGGGVTGRAVLAALTRFGMAATLCDDDPAALQQYADNGVATVSAATATQQMFERGRKYVLVVTSPGFAPTTPVLVAASAARVPIWGDVELAWRLDAAGYYGPPRRWLVVTGTNGKTTTTSMLHAMLAADNRRSLLCGNIGRPVLDVLTEFAEPSDFLAVELSSFQLHWAPSLRPEAGVVLNIAEDHLDWHSTMADYTMAKARVLTGRVAVVGLDDSRAAALLSTTVAPVRVGFRFGEPAVGELGVRDGYLVDRAFAEDLALMPVTSIPVSGPVGVLDALAAAALARSVGVGATAIADAVALFRLGRHRAEVVAVADGIRYVDDSKATNPHAALVSVLAYPRVVWVAGGLLKGASVDAEVARMAPQLVGAVLIGRDRAMVAEALSRHAPNVPVVQVVAGEDAGMHAVAVVSGTDVISISDVGGTIGTRVMVAAVAAARDLAQPGDTVLLAPAGASFDQFSGYADRGDTFATAVRAAIR.

An ATP-binding site is contributed by 124-130; it reads GTNGKTT.

Belongs to the MurCDEF family.

Its subcellular location is the cytoplasm. The catalysed reaction is UDP-N-acetyl-alpha-D-muramoyl-L-alanine + D-glutamate + ATP = UDP-N-acetyl-alpha-D-muramoyl-L-alanyl-D-glutamate + ADP + phosphate + H(+). Its pathway is cell wall biogenesis; peptidoglycan biosynthesis. Its function is as follows. Cell wall formation. Catalyzes the addition of glutamate to the nucleotide precursor UDP-N-acetylmuramoyl-L-alanine (UMA). The chain is UDP-N-acetylmuramoylalanine--D-glutamate ligase (murD) from Mycobacterium leprae (strain TN).